We begin with the raw amino-acid sequence, 282 residues long: 2-dehydro-3-deoxyphosphooctonate aldolase (282 aa).

The protein belongs to the KdsA family.

The protein resides in the cytoplasm. It carries out the reaction D-arabinose 5-phosphate + phosphoenolpyruvate + H2O = 3-deoxy-alpha-D-manno-2-octulosonate-8-phosphate + phosphate. The protein operates within carbohydrate biosynthesis; 3-deoxy-D-manno-octulosonate biosynthesis; 3-deoxy-D-manno-octulosonate from D-ribulose 5-phosphate: step 2/3. It participates in bacterial outer membrane biogenesis; lipopolysaccharide biosynthesis. The polypeptide is 2-dehydro-3-deoxyphosphooctonate aldolase (Shewanella pealeana (strain ATCC 700345 / ANG-SQ1)).